A 218-amino-acid polypeptide reads, in one-letter code: Thiopurine S-methyltransferase (218 aa).

Residues Trp-10, Leu-45, Glu-66, and Arg-123 each contribute to the S-adenosyl-L-methionine site.

Belongs to the class I-like SAM-binding methyltransferase superfamily. TPMT family.

It localises to the cytoplasm. It carries out the reaction S-adenosyl-L-methionine + a thiopurine = S-adenosyl-L-homocysteine + a thiopurine S-methylether.. The protein is Thiopurine S-methyltransferase of Shewanella loihica (strain ATCC BAA-1088 / PV-4).